We begin with the raw amino-acid sequence, 769 residues long: Signal transducer and activator of transcription 3.1 (769 aa).

An Essential for nuclear import motif is present at residues 150–162 (DVRKKVQDLEQKM). Residues 580 to 670 (WNEGYIMGFI…DATNILVSPL (91 aa)) form the SH2 domain. The residue at position 728 (S728) is a Phosphoserine; by NLK.

It belongs to the transcription factor STAT family. In terms of assembly, forms a homodimer or a heterodimer with a related family member, such as stat1. Interacts with nlk.2. In terms of processing, phosphorylation of both tyrosine and serine residues, together with dimerization, is required for mesoderm induction.

Its subcellular location is the cytoplasm. It localises to the nucleus. Transcription factor that binds to target promoter sequences and activates transcription upon il6st/gp130 stimulation. Mediates ventralization of embryos, at least in part via inhibition of smad2 signaling. Required for hairy2 to induce dll1/delta1 and promote neural crest cell proliferation and differentiation. Involved in TGFbeta-mediated mesoderm induction in early embryos, acting downstream of map3k7/tak1 and nlk.2. This chain is Signal transducer and activator of transcription 3.1 (stat3.1), found in Xenopus laevis (African clawed frog).